A 327-amino-acid polypeptide reads, in one-letter code: RNA ligase 1 (327 aa).

Requires Mg(2+) as cofactor. The cofactor is Mn(2+). Post-translationally, AMPylates itself (auto-AMPylation).

The catalysed reaction is ATP + (ribonucleotide)n-3'-hydroxyl + 5'-phospho-(ribonucleotide)m = (ribonucleotide)n+m + AMP + diphosphate.. In terms of biological role, functions as an RNA ligase, in vitro. The ligation reaction entails three nucleotidyl transfer steps. In the first step, the RNA ligase reacts with ATP in the absence of nucleic acid to form a covalent ligase-AMP intermediate and release pyrophosphate. In step 2, the ligase-AMP binds to the nucleic acid and transfers the adenylate to the 5'-PO4 terminus to form an adenylylated intermediate. In step 3, the RNA ligase directs the attack of the 3'-OH on the 5'-phosphoanhydride linkage, resulting in a repaired 3'-5' phosphodiester and release of AMP. Exhibits selectivity for single-stranded RNA substrates and may not have nick-sealing activity on double-stranded DNA-RNA hybrids. May play a role in maintaining RNA integrity under stress conditions, for example in response to reactive oxygen species (ROS). The protein is RNA ligase 1 of Mus musculus (Mouse).